The sequence spans 202 residues: Small ribosomal subunit protein uS4 (202 aa).

Residues 1-13 (MSRYRGPRLRVTR) are compositionally biased toward basic residues. The interval 1–42 (MSRYRGPRLRVTRRLGELPGLTRKASKKSNPPGQHGQARRKR) is disordered. The region spanning 90-152 (NRLDNVCFRL…KASKKLVEGN (63 aa)) is the S4 RNA-binding domain.

Belongs to the universal ribosomal protein uS4 family. In terms of assembly, part of the 30S ribosomal subunit. Contacts protein S5. The interaction surface between S4 and S5 is involved in control of translational fidelity.

Functionally, one of the primary rRNA binding proteins, it binds directly to 16S rRNA where it nucleates assembly of the body of the 30S subunit. In terms of biological role, with S5 and S12 plays an important role in translational accuracy. This is Small ribosomal subunit protein uS4 from Prochlorococcus marinus (strain MIT 9515).